The following is a 982-amino-acid chain: Glycine dehydrogenase (decarboxylating) (982 aa).

Lysine 729 carries the N6-(pyridoxal phosphate)lysine modification.

Belongs to the GcvP family. In terms of assembly, the glycine cleavage system is composed of four proteins: P, T, L and H. The cofactor is pyridoxal 5'-phosphate.

It catalyses the reaction N(6)-[(R)-lipoyl]-L-lysyl-[glycine-cleavage complex H protein] + glycine + H(+) = N(6)-[(R)-S(8)-aminomethyldihydrolipoyl]-L-lysyl-[glycine-cleavage complex H protein] + CO2. In terms of biological role, the glycine cleavage system catalyzes the degradation of glycine. The P protein binds the alpha-amino group of glycine through its pyridoxal phosphate cofactor; CO(2) is released and the remaining methylamine moiety is then transferred to the lipoamide cofactor of the H protein. The chain is Glycine dehydrogenase (decarboxylating) from Ralstonia nicotianae (strain ATCC BAA-1114 / GMI1000) (Ralstonia solanacearum).